The chain runs to 305 residues: Ribonuclease BN (305 aa).

The Zn(2+) site is built by H64, H66, D68, H69, H141, D212, and H270. The Proton acceptor role is filled by D68.

Belongs to the RNase Z family. RNase BN subfamily. In terms of assembly, homodimer. Zn(2+) is required as a cofactor.

Functionally, zinc phosphodiesterase, which has both exoribonuclease and endoribonuclease activities. The sequence is that of Ribonuclease BN from Escherichia coli O45:K1 (strain S88 / ExPEC).